A 736-amino-acid polypeptide reads, in one-letter code: Segment polarity protein dishevelled homolog DVL-2 (736 aa).

In terms of domain architecture, DIX spans 11–93 (VGETKVIYHL…RVVSWLVSSD (83 aa)). A disordered region spans residues 93–255 (DTPQPEVAPP…RMERTSSFSS (163 aa)). The span at 111–122 (VPPPPPLPPLPP) shows a compositional bias: pro residues. Positions 159–171 (LRRDRPRRRDSSE) are enriched in basic and acidic residues. Over residues 193–208 (ESSSTLMTSELESTSL) the composition is skewed to low complexity. Residue Ser211 is modified to Phosphoserine. Residues 218–230 (SRFSSSTEQSSAS) are compositionally biased toward polar residues. Residues 232 to 244 (LLKRHRRRRKQRP) show a composition bias toward basic residues. The PDZ domain occupies 267–339 (TVTLNMEKYN…NDDAVRVLRD (73 aa)). One can recognise a DEP domain in the interval 433–507 (PESGLEVRDR…SEQCYYVFGD (75 aa)). Residues 558 to 568 (PHPYSPQPPPY) show a composition bias toward pro residues. Residues 558–665 (PHPYSPQPPP…PNLRALPGLH (108 aa)) are disordered. Composition is skewed to low complexity over residues 581–598 (ASSQHSEGSRSSGSTRSD) and 614–629 (SKSGSGSESELSSRGG).

Belongs to the DSH family. Interacts through its PDZ domain with the C-terminal regions of VANGL1 and VANGL2. Interacts with Rac. Interacts with ARRB1; the interaction is enhanced by phosphorylation of DVL1. Can form large oligomers (via DIX domain). Interacts (via DIX domain) with DIXDC1 (via DIX domain). Interacts (via DEP domain) with AP2M1 and the AP-2 complex. Interacts with FAM105B/otulin. Interacts with DCDC2. Interacts (when phosphorylated) with FOXK1 and FOXK2; the interaction induces DVL2 nuclear translocation. Interacts with MAPK15. Interacts with PKD1 (via extracellular domain). Interacts with LMBR1L. Post-translationally, phosphorylated by CSNK1D. WNT3A induces DVL2 phosphorylation by CSNK1E and MARK kinases. Ubiquitinated via 'Lys-63'-linked polyubiquitin chains; leading to its autophagy-mediated degradation. As to expression, ubiquitous.

The protein resides in the cell membrane. Its subcellular location is the cytoplasm. The protein localises to the cytosol. It localises to the cytoplasmic vesicle. It is found in the nucleus. In terms of biological role, plays a role in the signal transduction pathways mediated by multiple Wnt genes. Participates both in canonical and non-canonical Wnt signaling by binding to the cytoplasmic C-terminus of frizzled family members and transducing the Wnt signal to down-stream effectors. Promotes internalization and degradation of frizzled proteins upon Wnt signaling. This chain is Segment polarity protein dishevelled homolog DVL-2 (Dvl2), found in Mus musculus (Mouse).